A 1465-amino-acid polypeptide reads, in one-letter code: DNA polymerase III PolC-type (1465 aa).

One can recognise an Exonuclease domain in the interval 427–583; it reads YVVFDVETTG…YDAEATGRLL (157 aa).

It belongs to the DNA polymerase type-C family. PolC subfamily.

It localises to the cytoplasm. It carries out the reaction DNA(n) + a 2'-deoxyribonucleoside 5'-triphosphate = DNA(n+1) + diphosphate. Its function is as follows. Required for replicative DNA synthesis. This DNA polymerase also exhibits 3' to 5' exonuclease activity. The chain is DNA polymerase III PolC-type from Streptococcus pyogenes serotype M2 (strain MGAS10270).